The primary structure comprises 230 residues: Ion-translocating oxidoreductase complex subunit E (230 aa).

Residues M1–P17 lie on the Cytoplasmic side of the membrane. 2 helical membrane-spanning segments follow: residues A18 to A38 and L39 to V59. The Cytoplasmic portion of the chain corresponds to R60–R68. The chain crosses the membrane as a helical span at residues I69 to A89. At Y90–Y92 the chain is on the periplasmic side. Residues G93–G113 form a helical membrane-spanning segment. Over R114–D123 the chain is Cytoplasmic. A helical membrane pass occupies residues V124–V144. The Periplasmic segment spans residues L145–S181. The helical transmembrane segment at A182–A202 threads the bilayer. Over K203–V230 the chain is Cytoplasmic.

This sequence belongs to the NqrDE/RnfAE family. The complex is composed of six subunits: RnfA, RnfB, RnfC, RnfD, RnfE and RnfG.

It localises to the cell inner membrane. Functionally, part of a membrane-bound complex that couples electron transfer with translocation of ions across the membrane. The sequence is that of Ion-translocating oxidoreductase complex subunit E from Vibrio cholerae serotype O1 (strain ATCC 39541 / Classical Ogawa 395 / O395).